The sequence spans 366 residues: Histidinol-phosphate aminotransferase (366 aa).

N6-(pyridoxal phosphate)lysine is present on Lys-222.

This sequence belongs to the class-II pyridoxal-phosphate-dependent aminotransferase family. Histidinol-phosphate aminotransferase subfamily. In terms of assembly, homodimer. The cofactor is pyridoxal 5'-phosphate.

It catalyses the reaction L-histidinol phosphate + 2-oxoglutarate = 3-(imidazol-4-yl)-2-oxopropyl phosphate + L-glutamate. Its pathway is amino-acid biosynthesis; L-histidine biosynthesis; L-histidine from 5-phospho-alpha-D-ribose 1-diphosphate: step 7/9. In Lysinibacillus sphaericus (strain C3-41), this protein is Histidinol-phosphate aminotransferase.